Here is a 496-residue protein sequence, read N- to C-terminus: Glycerol kinase (496 aa).

Threonine 11 contacts ADP. The ATP site is built by threonine 11, serine 12, and serine 13. A sn-glycerol 3-phosphate-binding site is contributed by threonine 11. Arginine 15 provides a ligand contact to ADP. 4 residues coordinate sn-glycerol 3-phosphate: arginine 81, glutamate 82, tyrosine 133, and aspartate 242. The glycerol site is built by arginine 81, glutamate 82, tyrosine 133, aspartate 242, and glutamine 243. ADP contacts are provided by threonine 264 and glycine 307. ATP is bound by residues threonine 264, glycine 307, glutamine 311, and glycine 412. 2 residues coordinate ADP: glycine 412 and asparagine 416.

This sequence belongs to the FGGY kinase family.

The enzyme catalyses glycerol + ATP = sn-glycerol 3-phosphate + ADP + H(+). Its pathway is polyol metabolism; glycerol degradation via glycerol kinase pathway; sn-glycerol 3-phosphate from glycerol: step 1/1. With respect to regulation, inhibited by fructose 1,6-bisphosphate (FBP). In terms of biological role, key enzyme in the regulation of glycerol uptake and metabolism. Catalyzes the phosphorylation of glycerol to yield sn-glycerol 3-phosphate. This is Glycerol kinase from Albidiferax ferrireducens (strain ATCC BAA-621 / DSM 15236 / T118) (Rhodoferax ferrireducens).